A 465-amino-acid chain; its full sequence is Lactaldehyde dehydrogenase (465 aa).

An NAD(+)-binding site is contributed by 220-225 (GSVEVG). Active-site residues include Glu240 and Cys274.

It belongs to the aldehyde dehydrogenase family. As to quaternary structure, homotetramer.

It carries out the reaction (S)-lactaldehyde + NAD(+) + H2O = (S)-lactate + NADH + 2 H(+). It functions in the pathway cofactor biosynthesis; coenzyme F420 biosynthesis. Involved in F420 biosynthesis through the oxidation of lactaldehyde to lactate. In Methanococcus vannielii (strain ATCC 35089 / DSM 1224 / JCM 13029 / OCM 148 / SB), this protein is Lactaldehyde dehydrogenase.